Here is a 63-residue protein sequence, read N- to C-terminus: Large ribosomal subunit protein uL30 (63 aa).

This sequence belongs to the universal ribosomal protein uL30 family. Part of the 50S ribosomal subunit.

This is Large ribosomal subunit protein uL30 from Rhodospirillum rubrum (strain ATCC 11170 / ATH 1.1.1 / DSM 467 / LMG 4362 / NCIMB 8255 / S1).